The following is a 135-amino-acid chain: Ribonuclease P protein component (135 aa).

The protein belongs to the RnpA family. Consists of a catalytic RNA component (M1 or rnpB) and a protein subunit.

The enzyme catalyses Endonucleolytic cleavage of RNA, removing 5'-extranucleotides from tRNA precursor.. RNaseP catalyzes the removal of the 5'-leader sequence from pre-tRNA to produce the mature 5'-terminus. It can also cleave other RNA substrates such as 4.5S RNA. The protein component plays an auxiliary but essential role in vivo by binding to the 5'-leader sequence and broadening the substrate specificity of the ribozyme. The sequence is that of Ribonuclease P protein component from Pseudomonas paraeruginosa (strain DSM 24068 / PA7) (Pseudomonas aeruginosa (strain PA7)).